Consider the following 352-residue polypeptide: Probable dual-specificity RNA methyltransferase RlmN (352 aa).

The Proton acceptor role is filled by E99. The 235-residue stretch at 105–339 (TKSRTTACVS…VTVRRSRGKD (235 aa)) folds into the Radical SAM core domain. Residues C112 and C344 are joined by a disulfide bond. 3 residues coordinate [4Fe-4S] cluster: C119, C123, and C126. Residues 170 to 171 (GE), S202, 225 to 227 (SLH), and N301 contribute to the S-adenosyl-L-methionine site. C344 (S-methylcysteine intermediate) is an active-site residue.

The protein belongs to the radical SAM superfamily. RlmN family. [4Fe-4S] cluster serves as cofactor.

Its subcellular location is the cytoplasm. It catalyses the reaction adenosine(2503) in 23S rRNA + 2 reduced [2Fe-2S]-[ferredoxin] + 2 S-adenosyl-L-methionine = 2-methyladenosine(2503) in 23S rRNA + 5'-deoxyadenosine + L-methionine + 2 oxidized [2Fe-2S]-[ferredoxin] + S-adenosyl-L-homocysteine. It carries out the reaction adenosine(37) in tRNA + 2 reduced [2Fe-2S]-[ferredoxin] + 2 S-adenosyl-L-methionine = 2-methyladenosine(37) in tRNA + 5'-deoxyadenosine + L-methionine + 2 oxidized [2Fe-2S]-[ferredoxin] + S-adenosyl-L-homocysteine. Functionally, specifically methylates position 2 of adenine 2503 in 23S rRNA and position 2 of adenine 37 in tRNAs. The chain is Probable dual-specificity RNA methyltransferase RlmN from Christiangramia forsetii (strain DSM 17595 / CGMCC 1.15422 / KT0803) (Gramella forsetii).